A 616-amino-acid polypeptide reads, in one-letter code: Dihydroxy-acid dehydratase (616 aa).

Residue Asp81 coordinates Mg(2+). Cys122 is a binding site for [2Fe-2S] cluster. Residues Asp123 and Lys124 each coordinate Mg(2+). An N6-carboxylysine modification is found at Lys124. Cys195 lines the [2Fe-2S] cluster pocket. Glu491 provides a ligand contact to Mg(2+). The Proton acceptor role is filled by Ser517.

This sequence belongs to the IlvD/Edd family. As to quaternary structure, homodimer. The cofactor is [2Fe-2S] cluster. Mg(2+) serves as cofactor.

The catalysed reaction is (2R)-2,3-dihydroxy-3-methylbutanoate = 3-methyl-2-oxobutanoate + H2O. It carries out the reaction (2R,3R)-2,3-dihydroxy-3-methylpentanoate = (S)-3-methyl-2-oxopentanoate + H2O. It functions in the pathway amino-acid biosynthesis; L-isoleucine biosynthesis; L-isoleucine from 2-oxobutanoate: step 3/4. The protein operates within amino-acid biosynthesis; L-valine biosynthesis; L-valine from pyruvate: step 3/4. Functionally, functions in the biosynthesis of branched-chain amino acids. Catalyzes the dehydration of (2R,3R)-2,3-dihydroxy-3-methylpentanoate (2,3-dihydroxy-3-methylvalerate) into 2-oxo-3-methylpentanoate (2-oxo-3-methylvalerate) and of (2R)-2,3-dihydroxy-3-methylbutanoate (2,3-dihydroxyisovalerate) into 2-oxo-3-methylbutanoate (2-oxoisovalerate), the penultimate precursor to L-isoleucine and L-valine, respectively. This Salmonella heidelberg (strain SL476) protein is Dihydroxy-acid dehydratase.